A 291-amino-acid chain; its full sequence is Prolyl 4-hydroxylase 5 (291 aa).

The Cytoplasmic segment spans residues Met1–Gln22. Residues Ala23–Leu43 traverse the membrane as a helical; Signal-anchor for type II membrane protein segment. The Extracellular portion of the chain corresponds to Ser44–Val291. Asn51 carries N-linked (GlcNAc...) asparagine glycosylation. A Fe2OG dioxygenase domain is found at Asn163 to Val286. 2 residues coordinate Fe cation: His181 and Asp183. Asn222 carries N-linked (GlcNAc...) asparagine glycosylation. Fe cation is bound at residue His267. Lys277 contacts 2-oxoglutarate.

This sequence belongs to the P4HA family. The cofactor is Fe(2+). It depends on L-ascorbate as a cofactor. Expressed in epidermal root hair cells (trichoblasts).

It localises to the endoplasmic reticulum membrane. The protein resides in the golgi apparatus membrane. It carries out the reaction L-prolyl-[collagen] + 2-oxoglutarate + O2 = trans-4-hydroxy-L-prolyl-[collagen] + succinate + CO2. Its function is as follows. Catalyzes the post-translational formation of 4-hydroxyproline in -Xaa-Pro-Gly- sequences in proline-rich peptide sequences of plant glycoproteins and other proteins. Hydroxyprolines are important constituent of many plant cell wall glycoproteins such as extensins, hydroxyproline-rich glycoproteins, lectins and arabinogalactan proteins. Possesses high affinity for leucine-rich repeat and proline-rich extensins of root cell walls that are essential for root hair development. Hydroxyprolines define the subsequent O-glycosylation sites by arabinosyltransferases which elongate the O-arabinosides on extensins. This chain is Prolyl 4-hydroxylase 5, found in Arabidopsis thaliana (Mouse-ear cress).